We begin with the raw amino-acid sequence, 391 residues long: Pectin acetylesterase 11 (391 aa).

Positions 1–23 (MTWLKQMWSSILVLAVVVIGARA) are cleaved as a signal peptide. Residues serine 171, aspartate 267, and histidine 334 each act as charge relay system in the active site.

It belongs to the pectinacetylesterase family.

The protein resides in the secreted. The protein localises to the cell wall. Functionally, hydrolyzes acetyl esters in homogalacturonan regions of pectin. In type I primary cell wall, galacturonic acid residues of pectin can be acetylated at the O-2 and O-3 positions. Decreasing the degree of acetylation of pectin gels in vitro alters their physical properties. In Arabidopsis thaliana (Mouse-ear cress), this protein is Pectin acetylesterase 11.